A 132-amino-acid chain; its full sequence is D-ribose pyranase (132 aa).

The Proton donor role is filled by H20. Residues D28, H99, and 121-123 (YSN) each bind substrate.

This sequence belongs to the RbsD / FucU family. RbsD subfamily. As to quaternary structure, homodecamer.

It localises to the cytoplasm. It catalyses the reaction beta-D-ribopyranose = beta-D-ribofuranose. It functions in the pathway carbohydrate metabolism; D-ribose degradation; D-ribose 5-phosphate from beta-D-ribopyranose: step 1/2. In terms of biological role, catalyzes the interconversion of beta-pyran and beta-furan forms of D-ribose. The protein is D-ribose pyranase of Streptococcus agalactiae serotype Ia (strain ATCC 27591 / A909 / CDC SS700).